Here is a 90-residue protein sequence, read N- to C-terminus: uncharacterized protein (90 aa).

The signal sequence occupies residues 1–18 (MKTLPVLVLSLTLLTVFS). The interval 28 to 50 (QAKQLLRSRRQDRPSKPGFPDEP) is disordered.

The protein localises to the secreted. This is an uncharacterized protein from Homo sapiens (Human).